Consider the following 418-residue polypeptide: Lactosylceramide alpha-2,3-sialyltransferase (418 aa).

The disordered stretch occupies residues 1 to 25; that stretch reads MRTKAAGCAERRPLQPRTEAAAAPA. Over 1–61 the chain is Cytoplasmic; sequence MRTKAAGCAE…RAQSKMRRPS (61 aa). The chain crosses the membrane as a helical; Signal-anchor for type II membrane protein span at residues 62-82; the sequence is LLLKDILKCTLLVFGVWILYI. Residues 83–418 lie on the Lumenal side of the membrane; it reads LKLNYTTEEC…DLSGGIDREF (336 aa). N-linked (GlcNAc...) asparagine glycosylation is found at Asn-86, Asn-236, and Asn-390. An intrachain disulfide couples Cys-195 to Cys-353.

This sequence belongs to the glycosyltransferase 29 family. In terms of processing, N-glycosylated. Ubiquitous. High expression in brain, skeletal muscle, placenta, and testis. mRNA widely distributed in human brain, but slightly elevated expression was observed in the cerebral cortex, temporal lobe, and putamen.

The protein resides in the golgi apparatus membrane. The enzyme catalyses a beta-D-Gal-(1-&gt;4)-beta-D-Glc-(1&lt;-&gt;1)-Cer(d18:1(4E)) + CMP-N-acetyl-beta-neuraminate = a ganglioside GM3 (d18:1(4E)) + CMP + H(+). It carries out the reaction ganglioside GA2 (d18:1(4E)/18:0) + CMP-N-acetyl-beta-neuraminate = ganglioside GM2 (d18:1(4E)/18:0) + CMP + H(+). The catalysed reaction is a beta-D-Gal-(1&lt;-&gt;1')-ceramide + CMP-N-acetyl-beta-neuraminate = N-acetyl-alpha-neuraminosyl-(2-&gt;3)-beta-D-galactosyl-(1&lt;-&gt;1')-ceramide + CMP + H(+). It catalyses the reaction a beta-D-galactosyl-(1&lt;-&gt;1')-N-acylsphing-4-enine + CMP-N-acetyl-beta-neuraminate = a ganglioside GM4 (d18:1(4E)) + CMP + H(+). The enzyme catalyses ganglioside GA1 (d18:1(4E)/18:0) + CMP-N-acetyl-beta-neuraminate = ganglioside GM1 (d18:1(4E)/18:0) + CMP + H(+). It functions in the pathway glycolipid biosynthesis. Its function is as follows. Transfers the sialyl group (N-acetyl-alpha-neuraminyl or NeuAc) from CMP-NeuAc to the non-reducing terminal galactose (Gal) of glycosphingolipids forming gangliosides (important molecules involved in the regulation of multiple cellular processes, including cell proliferation and differentiation, apoptosis, embryogenesis, development, and oncogenesis). Mainly involved in the biosynthesis of ganglioside GM3 but can also use different glycolipids as substrate acceptors such as D-galactosylceramide (GalCer), asialo-GM2 (GA2) and asialo-GM1 (GA1), although less preferentially than beta-D-Gal-(1-&gt;4)-beta-D-Glc-(1&lt;-&gt;1)-Cer (LacCer). This Homo sapiens (Human) protein is Lactosylceramide alpha-2,3-sialyltransferase (ST3GAL5).